Consider the following 2002-residue polypeptide: [F-actin]-monooxygenase MICAL3 (2002 aa).

The interval 2 to 494 (EERKHETMNP…RHLYDTGETK (493 aa)) is monooxygenase domain. Residues C97, 116–118 (EKR), 123–125 (RNN), F183, Y298, and D398 each bind FAD. In terms of domain architecture, Calponin-homology (CH) spans 518 to 624 (VARSSKLLGW…YLTQFYEMFK (107 aa)). Residue S649 is modified to Phosphoserine. Residues 658–706 (GQTISRKRSPKDKKEKDLDGAGKRRKTSQSEEEEAPRGHRGERPTLVST) form a disordered region. Positions 663 to 684 (RKRSPKDKKEKDLDGAGKRRKT) match the Nuclear localization signal motif. Positions 669–679 (DKKEKDLDGAG) are enriched in basic and acidic residues. Residues S685 and S687 each carry the phosphoserine modification. The 63-residue stretch at 762–824 (DTCYFCQKRV…KPHYCYRLSG (63 aa)) folds into the LIM zinc-binding domain. The Zn(2+) site is built by C764, C767, H785, C788, C791, C794, C814, and H817. The interval 835–883 (PLSGKEAKGPLQDGATTDANGRANAVASSTERTPGSGVNGLEEPSIAKR) is disordered. T887 is modified (phosphothreonine). Disordered regions lie at residues 907 to 1313 (QEVP…SPLA), 1335 to 1776 (RRSL…GKHR), and 1791 to 1821 (LSFSEDSDLSSDDVLEKSSQKSRREPRTYTE). Over residues 938 to 950 (SEMEEEGEEEEEE) the composition is skewed to acidic residues. At S977 the chain carries Phosphoserine. Residues 991 to 1017 (NEEEEEEEEEYEEEEEEDYDEEEEESS) show a composition bias toward acidic residues. Basic and acidic residues predominate over residues 1041–1054 (HWTHIREREEEERM). Over residues 1055–1066 (APASESSASGAP) the composition is skewed to low complexity. Over residues 1068 to 1102 (DENDLEEDVDSEPAEIEGEAAEDGDPGDTGAELDD) the composition is skewed to acidic residues. Phosphoserine is present on residues S1134, S1143, S1160, and S1192. Positions 1150–1163 (GPSQATSPIRSPQE) are enriched in polar residues. Residues 1191 to 1218 (KSPEERLFPEPLLPKEKPKADAPSDLKA) show a composition bias toward basic and acidic residues. The segment covering 1239–1258 (PGSPQPQPPVAASTPPPSPL) has biased composition (pro residues). Polar residues-rich tracts occupy residues 1268 to 1280 (TEATVPSPTQSPI) and 1288 to 1302 (KTSTPLAPLPVQSQS). A Phosphoserine modification is found at S1274. T1276 carries the post-translational modification Phosphothreonine. A Phosphoserine modification is found at S1278. S1310 and S1337 each carry phosphoserine. T1341 is modified (phosphothreonine). Residues S1371 and S1384 each carry the phosphoserine modification. The segment covering 1407–1422 (PSDRELRSAQEERREL) has biased composition (basic and acidic residues). The segment covering 1423–1435 (SSSSGLGLHGSSS) has biased composition (low complexity). The residue at position 1433 (S1433) is a Phosphoserine. Positions 1436-1451 (NMKTLGSQSFNTSDSA) are enriched in polar residues. T1454 is modified (phosphothreonine). The segment covering 1456 to 1467 (PSSPPPPPPPGE) has biased composition (pro residues). Over residues 1516-1530 (SVEEIPFADDVEDTY) the composition is skewed to acidic residues. Over residues 1588-1604 (EAKELAEERMRAREKSV) the composition is skewed to basic and acidic residues. The residue at position 1649 (S1649) is a Phosphoserine. T1651 is modified (phosphothreonine). Basic and acidic residues predominate over residues 1657–1668 (GSEEPTLKHEAT). Positions 1674–1694 (SPPSDSGGPDGSFTSSEGSSG) are enriched in low complexity. A compositionally biased stretch (basic residues) spans 1695–1713 (KSKKRSSLFSPRRNKKEKK). A phosphoserine mark is found at S1701 and S1704. The span at 1760–1769 (CPSTPSSGAT) shows a compositional bias: polar residues. Basic and acidic residues predominate over residues 1804-1820 (VLEKSSQKSRREPRTYT). A coiled-coil region spans residues 1821–1992 (EEELNAKLTR…EEDKDLEAAM (172 aa)). Residues 1841–1990 (KQEELKRLHR…EREEDKDLEA (150 aa)) form the bMERB domain. S1912 is subject to Phosphoserine.

It belongs to the Mical family. In terms of assembly, interacts with RAB1B, RAB8A, RAB10, RAB13 and RAB15 (in their GTP-bound forms); binding to RAB1B is of low affinity compared to other Rab proteins; at least in case of RAB8A can bind 2 molecules of RAB8A simultaneously through a high and a low affinity binding site, respectively. Interacts with ERC1 and RAB8A; may bridge ERC1 with RAB8A. Interacts with KIF23 and ERC1; enhances the interaction between KIF23 and ERC1. Interacts with NINL isoform 2. Requires FAD as cofactor. Ubiquitous.

The protein localises to the cytoplasm. Its subcellular location is the cell cortex. It is found in the cytoskeleton. The protein resides in the nucleus. It localises to the midbody. The protein localises to the spindle. Its subcellular location is the cilium basal body. It catalyses the reaction L-methionyl-[F-actin] + NADPH + O2 + H(+) = L-methionyl-(R)-S-oxide-[F-actin] + NADP(+) + H2O. Functionally, monooxygenase that promotes depolymerization of F-actin by mediating oxidation of specific methionine residues on actin to form methionine-sulfoxide, resulting in actin filament disassembly and preventing repolymerization. In the absence of actin, it also functions as a NADPH oxidase producing H(2)O(2). Seems to act as Rab effector protein and plays a role in vesicle trafficking. Involved in exocytic vesicles tethering and fusion: the monooxygenase activity is required for this process and implicates RAB8A associated with exocytotic vesicles. Required for cytokinesis. Contributes to stabilization and/or maturation of the intercellular bridge independently of its monooxygenase activity. Promotes recruitment of Rab8 and ERC1 to the intercellular bridge, and together these proteins are proposed to function in timely abscission. The protein is [F-actin]-monooxygenase MICAL3 (MICAL3) of Homo sapiens (Human).